We begin with the raw amino-acid sequence, 372 residues long: Cyclin-dependent kinase 9 (372 aa).

A Protein kinase domain is found at 19-315 (YEKLAKIGQG…SDDALNHDFF (297 aa)). 25–33 (IGQGTFGEV) is an ATP binding site. Lys-35 carries the post-translational modification Phosphoserine. Residue Lys-44 is modified to N6-acetyllysine; by EP300/CBP, PCAF/KAT2B and GCN5/KAT2A. Lys-48 contacts ATP. An N6-acetyllysine; by PCAF/KAT2B and GCN5/KAT2A modification is found at Lys-48. Asn-54 is subject to Phosphothreonine. 104–106 (DFC) contributes to the ATP binding site. The active-site Proton acceptor is Asp-149. The tract at residues 166–191 (ADFGLARAFSLAKNSQPNRYTNRVVT) is T-loop. Asp-167 provides a ligand contact to ATP. Ser-175 carries the phosphoserine modification. Position 186 is a phosphothreonine; by CaMK1D (Thr-186). Positions 343–372 (RRKGSQITQQSTNQSRNPATTNQTEFERVF) are disordered. Ser-347 is modified (phosphoserine; by CDK9 and PKA). Residues 347 to 366 (SQITQQSTNQSRNPATTNQT) are compositionally biased toward polar residues. A Phosphothreonine; by CDK9 modification is found at Thr-350. Ser-353 is subject to Phosphoserine; by CDK9. A Phosphothreonine; by CDK9 modification is found at Thr-354. Residue Ser-357 is modified to Phosphoserine; by CDK9. Thr-362 and Thr-363 each carry phosphothreonine; by CDK9.

It belongs to the protein kinase superfamily. CMGC Ser/Thr protein kinase family. CDC2/CDKX subfamily. Component of the super elongation complex (SEC), at least composed of EAF1, EAF2, CDK9, MLLT3/AF9, AFF (AFF1 or AFF4), the P-TEFb complex and ELL (ELL, ELL2 or ELL3). Associates with CCNT1/cyclin-T1, CCNT2/cyclin-T2 (isoform A and isoform B) or CCNK/cyclin-K to form active P-TEFb. P-TEFb forms a complex with AFF4/AF5Q31 and is part of the super elongation complex (SEC). Component of a complex which is composed of at least 5 members: HTATSF1/Tat-SF1, P-TEFb complex, RNA pol II, SUPT5H and NCL/nucleolin. Associates with UBR5 and forms a transcription regulatory complex composed of CDK9, RNAP II, UBR5 and TFIIS/TCEA1 that can stimulate target gene transcription (e.g. gamma fibrinogen/FGG) by recruiting their promoters. Component of the 7SK snRNP inactive complex which is composed of at least 8 members: P-TEFb (composed of CDK9 and CCNT1/cyclin-T1), HEXIM1, HEXIM2, LARP7, BCDIN3, SART3 proteins and 7SK and U6 snRNAs. This inactive 7SK snRNP complex can also interact with NCOR1 and HDAC3, probably to regulate CDK9 acetylation. Release of P-TEFb from P-TEFb/7SK snRNP complex requires both PP2B to transduce calcium Ca(2+) signaling in response to stimuli (e.g. UV or hexamethylene bisacetamide (HMBA)) and PPP1CA to dephosphorylate Thr-186. This released P-TEFb remains inactive in the pre-initiation complex with BRD4 until new Thr-186 phosphorylation occurs after the synthesis of a short RNA. Interacts with BRD4; to target chromatin binding. Interacts with JMJD6. Interacts with activated nuclear STAT3 and RELA/p65. Binds to AR and MYOD1. Forms a complex composed of CDK9, CCNT1/cyclin-T1, EP300 and GATA4 that stimulates hypertrophy in cardiomyocytes. The large PER complex involved in the repression of transcriptional termination is composed of at least PER2, CDK9, DDX5, DHX9, NCBP1 and POLR2A. Interacts with HSF1. Interacts with TBX21. Isoform 3: binds to KU70/XRCC6. Interacts with WDR43. Interacts with ZMYND8; the association appears to occur between homodimeric ZMYND8 and the activated form of the P-TEFb complex. In terms of assembly, (Microbial infection) Interacts with the acidic/proline-rich region of HIV-1 and HIV-2 Tat via T-loop region and is thus required for HIV to hijack host transcription machinery during its replication through cooperative binding to viral TAR RNA. As to quaternary structure, (Microbial infection) Interacts with human herpes virus 1 (HHV-1) protein ICP22; this interaction blocks the recruitment of positive transcription elongation factor b (P-TEFb) to the viral promoter. Post-translationally, autophosphorylation at Thr-186, Ser-347, Thr-350, Ser-353, Thr-354 and Ser-357 triggers kinase activity by promoting cyclin and substrate binding (e.g. HIV TAT) upon conformational changes. Thr-186 phosphorylation requires the calcium Ca(2+) signaling pathway, including CaMK1D and calmodulin. This inhibition is relieved by Thr-29 dephosphorylation. However, phosphorylation at Thr-29 is inhibitory within the HIV transcription initiation complex. Phosphorylation at Ser-175 inhibits kinase activity. Can be phosphorylated on either Thr-362 or Thr-363 but not on both simultaneously. In terms of processing, dephosphorylation of Thr-186 by PPM1A and PPM1B blocks CDK9 activity and may lead to CDK9 proteasomal degradation. However, PPP1CA-mediated Thr-186 dephosphorylation is required to release P-TEFb from its inactive P-TEFb/7SK snRNP complex. Dephosphorylated at Ser-347 by the PNUTS-PP1 complex during RNA polymerase II transcription pause-release. Dephosphorylation of C-terminus Thr and Ser residues by protein phosphatase-1 (PP1) triggers CDK9 activity, contributing to the activation of HIV-1 transcription. N6-acetylation of Lys-44 promotes kinase activity, whereas acetylation of both Lys-44 and Lys-48 mediated by PCAF/KAT2B and GCN5/KAT2A reduces kinase activity. The acetylated form associates with PML bodies in the nuclear matrix and with the transcriptionally silent HIV-1 genome; deacetylated upon transcription stimulation. Deacetylated by SIRT7, promoting the kinase activity and subsequent 'Ser-2' phosphorylation of the C-terminal domain (CTD) of RNA polymerase II. Post-translationally, polyubiquitinated and thus activated by UBR5. This ubiquitination is promoted by TFIIS/TCEA1 and favors 'Ser-2' phosphorylation of RPB1/POLR2A CTD. In terms of tissue distribution, ubiquitous.

The protein localises to the nucleus. It localises to the cytoplasm. It is found in the PML body. The catalysed reaction is L-seryl-[protein] + ATP = O-phospho-L-seryl-[protein] + ADP + H(+). The enzyme catalyses L-threonyl-[protein] + ATP = O-phospho-L-threonyl-[protein] + ADP + H(+). It catalyses the reaction [DNA-directed RNA polymerase] + ATP = phospho-[DNA-directed RNA polymerase] + ADP + H(+). Inhibited by CDKI-71, CR8, GPC-286199, AG-024322, flavopiridol (alvocidib), RBG-286147, anilinopyrimidine 32, arylazopyrazole 31b, indirubin 3'-monoxime, meriolin 3,P276-00, olomoucine II, pyrazolotriazine, meriolin, variolin, thiazolyl-pyrimidine, thiazolyl-pyrimidine, indirubin-30-monoxime, ZK 304709, AG-012986, AT7519, R547, RGB-286638, imidazole pyrimidine, EXEL-3700, EXEL-8647, 5,6-dichloro-1-b-ribofur-anosyl-benzimidazole (DRB), P276-00, roscovitine (seliciclib, CYC202) and SNS-032 (BMS-387032). Activation by Thr-186 phosphorylation is calcium Ca(2+) signaling pathway-dependent; actively inactivated by dephosphorylation mediated by PPP1CA, PPM1A and PPM1B. Reversibly repressed by acetylation at Lys-44 and Lys-48. Functionally, protein kinase involved in the regulation of transcription. Member of the cyclin-dependent kinase pair (CDK9/cyclin-T) complex, also called positive transcription elongation factor b (P-TEFb), which facilitates the transition from abortive to productive elongation by phosphorylating the CTD (C-terminal domain) of the large subunit of RNA polymerase II (RNAP II) POLR2A, SUPT5H and RDBP. This complex is inactive when in the 7SK snRNP complex form. Phosphorylates EP300, MYOD1, RPB1/POLR2A and AR and the negative elongation factors DSIF and NELFE. Regulates cytokine inducible transcription networks by facilitating promoter recognition of target transcription factors (e.g. TNF-inducible RELA/p65 activation and IL-6-inducible STAT3 signaling). Promotes RNA synthesis in genetic programs for cell growth, differentiation and viral pathogenesis. P-TEFb is also involved in cotranscriptional histone modification, mRNA processing and mRNA export. Modulates a complex network of chromatin modifications including histone H2B monoubiquitination (H2Bub1), H3 lysine 4 trimethylation (H3K4me3) and H3K36me3; integrates phosphorylation during transcription with chromatin modifications to control co-transcriptional histone mRNA processing. The CDK9/cyclin-K complex has also a kinase activity towards CTD of RNAP II and can substitute for CDK9/cyclin-T P-TEFb in vitro. Replication stress response protein; the CDK9/cyclin-K complex is required for genome integrity maintenance, by promoting cell cycle recovery from replication arrest and limiting single-stranded DNA amount in response to replication stress, thus reducing the breakdown of stalled replication forks and avoiding DNA damage. In addition, probable function in DNA repair of isoform 2 via interaction with KU70/XRCC6. Promotes cardiac myocyte enlargement. RPB1/POLR2A phosphorylation on 'Ser-2' in CTD activates transcription. AR phosphorylation modulates AR transcription factor promoter selectivity and cell growth. DSIF and NELF phosphorylation promotes transcription by inhibiting their negative effect. The phosphorylation of MYOD1 enhances its transcriptional activity and thus promotes muscle differentiation. Catalyzes phosphorylation of KAT5, promoting KAT5 recruitment to chromatin and histone acetyltransferase activity. This Homo sapiens (Human) protein is Cyclin-dependent kinase 9.